A 170-amino-acid polypeptide reads, in one-letter code: Acetyl-CoA decarbonylase/synthase complex subunit epsilon 2 (170 aa).

Belongs to the CdhB family. Heterotetramer of two alpha and two epsilon subunits. The ACDS complex is made up of alpha, epsilon, beta, gamma and delta subunits with a probable stoichiometry of (alpha(2)epsilon(2))(4)-beta(8)-(gamma(1)delta(1))(8).

It functions in the pathway one-carbon metabolism; methanogenesis from acetate. Functionally, part of a complex that catalyzes the reversible cleavage of acetyl-CoA, allowing growth on acetate as sole source of carbon and energy. The alpha-epsilon subcomponent functions as a carbon monoxide dehydrogenase. The precise role of the epsilon subunit is unclear; it may have a stabilizing role within the alpha(2)epsilon(2) component and/or be involved in electron transfer to FAD during a potential FAD-mediated CO oxidation. The polypeptide is Acetyl-CoA decarbonylase/synthase complex subunit epsilon 2 (cdhB2) (Methanosarcina mazei (strain ATCC BAA-159 / DSM 3647 / Goe1 / Go1 / JCM 11833 / OCM 88) (Methanosarcina frisia)).